Consider the following 244-residue polypeptide: MAKRRGLALDGVLLLDKPVGLSSNHALQRAKRTVDAAKAGHTGTLDPFATGLLVCCMGRATKISGRMLEADKTYQATLQFGEETDSGDLTGHIVARAPDGFAGVEEAALRDVLSRFVGTIEQIPPMYSALKRDGKPLYEYARAGIELDRPPRQVTIRHIELLSFSGMQAQIDVACSKGTYIRTLAQDIGRALGCHAHLAALRRTHVGPFSLDRAVTLEALQAMPDAKQALLAMNELPAGLLPAT.

D46 acts as the Nucleophile in catalysis.

It belongs to the pseudouridine synthase TruB family. Type 1 subfamily.

It catalyses the reaction uridine(55) in tRNA = pseudouridine(55) in tRNA. Responsible for synthesis of pseudouridine from uracil-55 in the psi GC loop of transfer RNAs. The polypeptide is tRNA pseudouridine synthase B (Bordetella bronchiseptica (strain ATCC BAA-588 / NCTC 13252 / RB50) (Alcaligenes bronchisepticus)).